We begin with the raw amino-acid sequence, 553 residues long: Transmembrane protein DDB_G0292058 (553 aa).

The N-terminal stretch at Met-1–Ala-26 is a signal peptide. Helical transmembrane passes span Ile-80–Phe-100 and Val-137–Thr-157. Asn-162, Asn-171, Asn-178, and Asn-195 each carry an N-linked (GlcNAc...) asparagine glycan. 2 helical membrane passes run Ile-243–Leu-263 and Ser-274–Ile-294. Asn-315, Asn-332, Asn-351, Asn-396, Asn-405, and Asn-462 each carry an N-linked (GlcNAc...) asparagine glycan. A helical membrane pass occupies residues Leu-515–Ile-535.

It localises to the membrane. This Dictyostelium discoideum (Social amoeba) protein is Transmembrane protein DDB_G0292058.